Reading from the N-terminus, the 68-residue chain is MGMRMMFIMFMLVVLATTVVTFTSDRALDAMNAAASNKASRLIALAVRGCCARAACAGIHQELCGGGR.

The N-terminal stretch at 1-21 (MGMRMMFIMFMLVVLATTVVT) is a signal peptide. Residues 22-48 (FTSDRALDAMNAAASNKASRLIALAVR) constitute a propeptide that is removed on maturation. 2 cysteine pairs are disulfide-bonded: Cys50–Cys56 and Cys51–Cys64. Residues 52 to 54 (ARA) form a lacks the Ser-Xaa-Pro motif that is crucial for potent interaction with nAChR region. A Glycine amide modification is found at Gly65. Positions 66 to 68 (GGR) are excised as a propeptide.

Belongs to the conotoxin A superfamily. In terms of tissue distribution, expressed by the venom duct.

It is found in the secreted. Its function is as follows. Alpha-conotoxins act on postsynaptic membranes, they bind to the nicotinic acetylcholine receptors (nAChR) and thus inhibit them. Synthetic peptide inhibits alpha-6/alpha-3/beta-2 and alpha-3/beta-2 nicotinic acetylcholine receptors and causes uncoordinated movement when intramuscularly injected into goldfish. Has a distinct nAChR binding mode from other alpha-conotoxins, due to a different three residue motif (Ala-Xaa-Ala instead of the conserved Ser-Xaa-Pro motif). The protein is Alpha-conotoxin Lp1.1 of Conus leopardus (Leopard cone).